We begin with the raw amino-acid sequence, 234 residues long: Superoxide dismutase [Mn], mitochondrial (234 aa).

The N-terminal 34 residues, Met-1–Ser-34, are a transit peptide targeting the mitochondrion. 4 residues coordinate Mn(2+): His-60, His-108, Asp-198, and His-202.

It belongs to the iron/manganese superoxide dismutase family. As to quaternary structure, homotetramer. Mn(2+) is required as a cofactor.

The protein resides in the mitochondrion matrix. It catalyses the reaction 2 superoxide + 2 H(+) = H2O2 + O2. Functionally, destroys superoxide anion radicals which are normally produced within the cells and which are toxic to biological systems. This chain is Superoxide dismutase [Mn], mitochondrial (SOD2), found in Candida albicans (Yeast).